The sequence spans 212 residues: Adenylate kinase (212 aa).

10-15 (GAGKGT) serves as a coordination point for ATP. Residues 30–59 (STGDMFRAAMANQTEMGRLAKSYIDKGELV) form an NMP region. Residues Thr31, Arg36, 57–59 (ELV), 86–89 (GYPR), and Gln93 each bind AMP. The tract at residues 127-159 (GRIINRKTGETFHKVFNPPVDYKEEDYYQREDD) is LID. Residues Arg128 and 137–138 (TF) contribute to the ATP site. Positions 156 and 167 each coordinate AMP. An ATP-binding site is contributed by Gln195.

It belongs to the adenylate kinase family. Monomer.

It localises to the cytoplasm. The catalysed reaction is AMP + ATP = 2 ADP. The protein operates within purine metabolism; AMP biosynthesis via salvage pathway; AMP from ADP: step 1/1. Catalyzes the reversible transfer of the terminal phosphate group between ATP and AMP. Plays an important role in cellular energy homeostasis and in adenine nucleotide metabolism. The polypeptide is Adenylate kinase (Streptococcus agalactiae serotype Ia (strain ATCC 27591 / A909 / CDC SS700)).